A 398-amino-acid chain; its full sequence is Argininosuccinate lyase (398 aa).

This sequence belongs to the lyase 1 family. Argininosuccinate lyase subfamily.

The protein localises to the cytoplasm. It carries out the reaction 2-(N(omega)-L-arginino)succinate = fumarate + L-arginine. It participates in amino-acid biosynthesis; L-arginine biosynthesis; L-arginine from L-ornithine and carbamoyl phosphate: step 3/3. The protein is Argininosuccinate lyase of Thermotoga neapolitana (strain ATCC 49049 / DSM 4359 / NBRC 107923 / NS-E).